An 85-amino-acid polypeptide reads, in one-letter code: Large ribosomal subunit protein bL27 (85 aa).

Positions 1–23 (MAHKKAGGSTRNGRDSESKRLGV) are disordered.

Belongs to the bacterial ribosomal protein bL27 family.

The polypeptide is Large ribosomal subunit protein bL27 (Thioalkalivibrio sulfidiphilus (strain HL-EbGR7)).